The following is a 431-amino-acid chain: Indole diterpene prenyltransferase nodD1 (431 aa).

85 to 86 (FI) is an L-tryptophan binding site. Residues arginine 107, lysine 194, arginine 268, lysine 270, tyrosine 272, and tyrosine 353 each contribute to the substrate site.

The protein belongs to the tryptophan dimethylallyltransferase family.

Its pathway is secondary metabolite biosynthesis. Its function is as follows. Indole diterpene prenyltransferase; part of the gene cluster that mediates the biosynthesis of the indole diterpenes nodulisporic acids (NA). Nodulisporic acid A (NAA) and its chemically modified derivatives are of particular significance because of their highly potent insecticidal activity against blood-feeding arthropods and lack of observable adverse effects on mammals, in particular the tremogenicity associated with the paspaline-derived IDTs is not observed. The geranylgeranyl diphosphate (GGPP) synthase ggs1, localized outside of the cluster, is proposed to catalyze the first step in nodulisporic acid biosynthesis via conversion of farnesyl pyrophosphate and isopentyl pyrophosphate into geranylgeranyl pyrophosphate (GGPP). Condensation of indole-3-glycerol phosphate with GGPP by the prenyl transferase nodC then forms 3-geranylgeranylindole (3-GGI). Epoxidation by the FAD-dependent monooxygenase nodM leads to a single-epoxidized-GGI that is substrate of the terpene cyclase nodB for cyclization to yield emindole SB. The terminal methyl carbon, C28, of emindole SB is then oxidized by the cytochrome P450 monooxygenase nodW to produce nodulisporic acid F (NAF), the pentacyclic core of NAA. NAF is converted to nodulisporic acid E (NAE) via prenylation. This step is probably performed by one of the indole diterpene prenyltransferases nodD1 or nodD2. Several oxidation steps performed by the FAD-linked oxidoreductase nodO and one of the cytochrome P450 monooxygenase nodR, nodX or nodZ further convert NAE to nodulisporic acid D (NAD). NAD is substrate of cytochrome P450 monooxygenase nodJ to produce the precursor of nodulisporic acid C (NAC), converted to NAC by one of the indole diterpene prenyltransferases nodD1 or nodD2. The FAD-dependent monooxygenase nodY2 then oxidizes NAC to nodulisporic acid B (NAB). Finally NAB is converted to NAA by one of the cytochrome P450 monooxygenases nodR, nodX or nodZ. The chain is Indole diterpene prenyltransferase nodD1 from Hypoxylon pulicicidum.